The primary structure comprises 78 residues: MTRHLIFAAVLLVCLFVCWNAVGAQDARSAFSSEETAQDQHVMEERIFINPAGNREKNACMENCRSSPNCKNYEFCSK.

Residues Met1–Ala24 form the signal peptide. A propeptide spanning residues Gln25–Arg28 is cleaved from the precursor.

It belongs to the scoloptoxin-04 family. In terms of processing, contains 2 disulfide bonds. In terms of tissue distribution, expressed by the venom gland.

It localises to the secreted. In Ethmostigmus rubripes (Giant centipede), this protein is U-scoloptoxin(04)-Er1b.